The following is a 595-amino-acid chain: Fructan 1-exohydrolase (595 aa).

An N-terminal signal peptide occupies residues 1–20 (MAQAWAFLLPLLVLGSYVTS). Asp74 is a catalytic residue. Residues Asn167, Asn235, and Asn247 are each glycosylated (N-linked (GlcNAc...) asparagine). Cys445 and Cys491 are disulfide-bonded. Residue Asn566 is glycosylated (N-linked (GlcNAc...) asparagine).

This sequence belongs to the glycosyl hydrolase 32 family.

It carries out the reaction Hydrolysis of terminal, non-reducing (2-&gt;1)-linked beta-D-fructofuranose residues in fructans.. With respect to regulation, inhibited by sucrose. Functionally, hydrolyzes inulin-type beta-(2,1)-fructans. May play a role as a beta-(2,1)-trimmer during graminan biosynthesis. This chain is Fructan 1-exohydrolase, found in Aegilops speltoides (Goatgrass).